Reading from the N-terminus, the 450-residue chain is Phosphomethylpyrimidine synthase (450 aa).

Substrate contacts are provided by residues asparagine 80, methionine 109, tyrosine 138, histidine 173, 193–195 (SRG), 234–237 (DSLR), and glutamate 273. Position 277 (histidine 277) interacts with Zn(2+). Tyrosine 300 contributes to the substrate binding site. Histidine 341 provides a ligand contact to Zn(2+). Residues cysteine 421, cysteine 424, and cysteine 429 each coordinate [4Fe-4S] cluster.

Belongs to the ThiC family. As to quaternary structure, homodimer. [4Fe-4S] cluster serves as cofactor.

The catalysed reaction is 5-amino-1-(5-phospho-beta-D-ribosyl)imidazole + S-adenosyl-L-methionine = 4-amino-2-methyl-5-(phosphooxymethyl)pyrimidine + CO + 5'-deoxyadenosine + formate + L-methionine + 3 H(+). It functions in the pathway cofactor biosynthesis; thiamine diphosphate biosynthesis. Catalyzes the synthesis of the hydroxymethylpyrimidine phosphate (HMP-P) moiety of thiamine from aminoimidazole ribotide (AIR) in a radical S-adenosyl-L-methionine (SAM)-dependent reaction. In Campylobacter fetus subsp. fetus (strain 82-40), this protein is Phosphomethylpyrimidine synthase.